We begin with the raw amino-acid sequence, 467 residues long: Glutamate--tRNA ligase (467 aa).

Positions 15–25 (PSPTGYLHVGG) match the 'HIGH' region motif. Positions 249 to 253 (KLSKR) match the 'KMSKS' region motif. Lys252 contacts ATP.

It belongs to the class-I aminoacyl-tRNA synthetase family. Glutamate--tRNA ligase type 1 subfamily. In terms of assembly, monomer.

It is found in the cytoplasm. The enzyme catalyses tRNA(Glu) + L-glutamate + ATP = L-glutamyl-tRNA(Glu) + AMP + diphosphate. In terms of biological role, catalyzes the attachment of glutamate to tRNA(Glu) in a two-step reaction: glutamate is first activated by ATP to form Glu-AMP and then transferred to the acceptor end of tRNA(Glu). This chain is Glutamate--tRNA ligase, found in Coprothermobacter proteolyticus (strain ATCC 35245 / DSM 5265 / OCM 4 / BT).